The following is a 201-amino-acid chain: Putative ankyrin repeat protein R868 (201 aa).

ANK repeat units follow at residues 125–154 and 156–188; these read YENN…NCYF and KAKK…DYNF.

In Acanthamoeba polyphaga (Amoeba), this protein is Putative ankyrin repeat protein R868.